The sequence spans 101 residues: MIPGEIIAASGDIELNAGAPTVTLEVSNTGDRPVQVGSHYHFAETNAGLSFDRAAAHGKRLDIPAGTAVRFEPGQTRSVTLIPLSGKREVYGFRQLVMGKL.

This sequence belongs to the urease beta subunit family. As to quaternary structure, heterotrimer of UreA (gamma), UreB (beta) and UreC (alpha) subunits. Three heterotrimers associate to form the active enzyme.

Its subcellular location is the cytoplasm. The catalysed reaction is urea + 2 H2O + H(+) = hydrogencarbonate + 2 NH4(+). It functions in the pathway nitrogen metabolism; urea degradation; CO(2) and NH(3) from urea (urease route): step 1/1. The chain is Urease subunit beta from Rhizobium leguminosarum bv. trifolii (strain WSM2304).